A 311-amino-acid polypeptide reads, in one-letter code: Acetaldehyde dehydrogenase (311 aa).

C131 acts as the Acyl-thioester intermediate in catalysis. NAD(+)-binding positions include 162 to 170 and N273; that span reads SVGPGTRKN.

The protein belongs to the acetaldehyde dehydrogenase family.

The catalysed reaction is acetaldehyde + NAD(+) + CoA = acetyl-CoA + NADH + H(+). This chain is Acetaldehyde dehydrogenase, found in Ralstonia pickettii (strain 12J).